Reading from the N-terminus, the 166-residue chain is Small ribosomal subunit protein uS5 (166 aa).

The region spanning 11 to 74 (LIEKLITVNR…EKARRNMVTV (64 aa)) is the S5 DRBM domain.

Belongs to the universal ribosomal protein uS5 family. As to quaternary structure, part of the 30S ribosomal subunit. Contacts proteins S4 and S8.

In terms of biological role, with S4 and S12 plays an important role in translational accuracy. Located at the back of the 30S subunit body where it stabilizes the conformation of the head with respect to the body. This Idiomarina loihiensis (strain ATCC BAA-735 / DSM 15497 / L2-TR) protein is Small ribosomal subunit protein uS5.